The following is a 446-amino-acid chain: Tripartite motif-containing protein 43C (446 aa).

The segment at 16-57 (CSICQGIFMDPVYLRCGHKFCETCLLLFQEDIKFPAYCPTCR) adopts an RING-type zinc-finger fold. Residues 88-129 (SEEHKCVTHKAKKMIFCDKSKILLCHLCSDSQEHSGHTHCSI) form a B box-type zinc finger. 4 residues coordinate Zn(2+): Cys93, His96, Cys115, and His121. The region spanning 271–446 (RLRAHSIPGL…VRPFFFAAYT (176 aa)) is the B30.2/SPRY domain.

The protein belongs to the TRIM/RBCC family.

The chain is Tripartite motif-containing protein 43C from Mus musculus (Mouse).